The primary structure comprises 419 residues: Gustatory receptor for bitter taste 93a (419 aa).

Residues 1–55 are Cytoplasmic-facing; it reads MFSSSSAMTGKRAESWSRLLLLWLYRCARGLLVLSSSLDRDKLQLKATKQGSRNR. Residues 56-76 form a helical membrane-spanning segment; that stretch reads FLHILWRCIVVMIYAGLWPML. Residues 77–90 are Extracellular-facing; that stretch reads TSAVIGKRLESYAD. The helical transmembrane segment at 91–111 threads the bilayer; it reads VLALAQSMSVSILAVISFVIQ. The Cytoplasmic portion of the chain corresponds to 112-145; sequence ARGENQFREVLNRYLALYQRICLTTRLRHLFPTK. Residues 146–166 traverse the membrane as a helical segment; it reads FVVFFLLKLFFTLCGCFHEII. Topologically, residues 167-184 are extracellular; the sequence is PLFENSHFDDISQMVGTG. A helical membrane pass occupies residues 185 to 205; sequence FGIYMWLGTLCVLDACFLGFL. Residues 206–277 lie on the Cytoplasmic side of the membrane; the sequence is VSGILYEHMA…NSFRRILQWQ (72 aa). Residues 278-298 traverse the membrane as a helical segment; sequence ILFYIYLNFINICLMLYQYIL. Over 299 to 305 the chain is Extracellular; the sequence is HFLNDDE. The chain crosses the membrane as a helical span at residues 306–326; the sequence is VVFVSIVMAFVKLANLVLLMM. Residues 327 to 383 are Cytoplasmic-facing; it reads CADYTVRQSEVPKKLPLDIVCSDMDERWDKSVETFLGQLQTQRLEIKVLGFFHLNNE. Residues 384 to 404 form a helical membrane-spanning segment; it reads FILLILSAIISYLFILIQFGI. The Extracellular segment spans residues 405–419; that stretch reads TGGFEASEDIKNRFD.

It belongs to the insect chemoreceptor superfamily. Gustatory receptor (GR) family. Gr93a subfamily. As to expression, in larvae, is expressed in neurons of the dorsal pharyngeal sense organs.

It localises to the cell membrane. In terms of biological role, gustatory receptor required for response to the bitter in taste neurons. Gr93a cells respond to bitter compounds such as caffeine. Flies avoid bitter substances, suggesting that Gr93a neuron activity is sufficient to mediate avoidance behavior. The protein is Gustatory receptor for bitter taste 93a (Gr93a) of Drosophila melanogaster (Fruit fly).